The following is a 259-amino-acid chain: Dihydroorotate dehydrogenase B (NAD(+)), electron transfer subunit (259 aa).

The FAD-binding FR-type domain occupies 2–102 (MQKQNMIVVN…LGPLGHGFPL (101 aa)). Residues 53 to 56 (RPIS), 70 to 72 (LYR), and 77 to 78 (GT) each bind FAD. [2Fe-2S] cluster is bound by residues cysteine 221, cysteine 226, cysteine 229, and cysteine 246.

This sequence belongs to the PyrK family. Heterotetramer of 2 PyrK and 2 PyrD type B subunits. The cofactor is [2Fe-2S] cluster. Requires FAD as cofactor.

It functions in the pathway pyrimidine metabolism; UMP biosynthesis via de novo pathway; orotate from (S)-dihydroorotate (NAD(+) route): step 1/1. In terms of biological role, responsible for channeling the electrons from the oxidation of dihydroorotate from the FMN redox center in the PyrD type B subunit to the ultimate electron acceptor NAD(+). This chain is Dihydroorotate dehydrogenase B (NAD(+)), electron transfer subunit, found in Bacillus cereus (strain B4264).